Consider the following 342-residue polypeptide: Mitogen-activated protein kinase kinase kinase 20 (342 aa).

Residues 3–268 (WVRGETIGFG…AEMLLNHSFV (266 aa)) enclose the Protein kinase domain. 9 to 17 (IGFGTFSTV) serves as a coordination point for ATP. S18 carries the post-translational modification Phosphoserine. T19 carries the post-translational modification Phosphothreonine. K36 provides a ligand contact to ATP. 2 positions are modified to phosphotyrosine: Y41 and Y66. Phosphoserine is present on residues S93 and S114. The active-site Proton acceptor is D131. The tract at residues 285–342 (KDEDKVLMSPKCPFEFDDWDSFTLDSNPSFDSPVERLGSLVSGSIPDWSVGGSWLTVR) is required for MKK3 binding.

Belongs to the protein kinase superfamily. Ser/Thr protein kinase family. As to quaternary structure, interacts with MKK3 and MPK18 via its C-terminal domain. Binds to MKK5. Post-translationally, autophosphorylates; active in phosphorylated state. Dephosphorylated by ABI1. Expressed in roots, seedlings, leaves, flower buds, flowers and siliques.

It is found in the nucleus. It localises to the cytoplasm. The enzyme catalyses L-seryl-[protein] + ATP = O-phospho-L-seryl-[protein] + ADP + H(+). The catalysed reaction is L-threonyl-[protein] + ATP = O-phospho-L-threonyl-[protein] + ADP + H(+). Its activity is regulated as follows. Activated through serine, threonine and tyrosine phosphorylation, especially upon abscisic acid (ABA) treatment. Restricted activity by ABI1-mediated dephosphorylation. Functionally, mitogen-activated protein kinase kinase (MAPKK) that phosphorylates both MKK3 and MPK18 and regulate two separate signaling pathways involved in root microtubule functions. MAPKK which regulates abscisic acid (ABA) responses in a MAPKKK20-MKK5-MPK6 cascade involved in root growth (e.g. root cell division and elongation) and stomatal response, probably via MKK5 activation by protein phosphorylation and subsequent activation of MAPK6 by MKK5. Involved in various abiotic stresses (e.g. osmotic stress, cold and hydrogen peroxide) responses by phosphorylating and thus regulating MPK6 activity, in an ABA-independent manner. This chain is Mitogen-activated protein kinase kinase kinase 20, found in Arabidopsis thaliana (Mouse-ear cress).